The sequence spans 130 residues: Small ribosomal subunit protein uS9 (130 aa).

Positions 111-130 (VERKKVGLRKARRRPQFSKR) are disordered. The span at 116–130 (VGLRKARRRPQFSKR) shows a compositional bias: basic residues.

It belongs to the universal ribosomal protein uS9 family.

The sequence is that of Small ribosomal subunit protein uS9 from Enterobacter sp. (strain 638).